The primary structure comprises 111 residues: Translation initiation factor 1A 1 (111 aa).

Residues 1–26 (MTLADLKKPTSRATPSTEETFTRVRT) are disordered. The region spanning 22 to 96 (TRVRTPRREN…EKADVIWKYT (75 aa)) is the S1-like domain.

This sequence belongs to the eIF-1A family.

Its function is as follows. Seems to be required for maximal rate of protein biosynthesis. Enhances ribosome dissociation into subunits and stabilizes the binding of the initiator Met-tRNA(I) to 40 S ribosomal subunits. The protein is Translation initiation factor 1A 1 (eIF1A1) of Methanosarcina acetivorans (strain ATCC 35395 / DSM 2834 / JCM 12185 / C2A).